Consider the following 234-residue polypeptide: NAD-dependent protein deacylase (234 aa).

One can recognise a Deacetylase sirtuin-type domain in the interval Met-1–Pro-234. NAD(+) is bound at residue Gly-9–Trp-28. Tyr-53 and Arg-56 together coordinate substrate. Gln-86 to Asp-89 contacts NAD(+). The active-site Proton acceptor is His-104. Gly-175–Ser-177 contributes to the NAD(+) binding site.

Belongs to the sirtuin family. Class III subfamily.

Its subcellular location is the cytoplasm. It catalyses the reaction N(6)-acetyl-L-lysyl-[protein] + NAD(+) + H2O = 2''-O-acetyl-ADP-D-ribose + nicotinamide + L-lysyl-[protein]. The enzyme catalyses N(6)-succinyl-L-lysyl-[protein] + NAD(+) + H2O = 2''-O-succinyl-ADP-D-ribose + nicotinamide + L-lysyl-[protein]. In terms of biological role, NAD-dependent lysine deacetylase and desuccinylase that specifically removes acetyl and succinyl groups on target proteins. Modulates the activities of several proteins which are inactive in their acylated form. The polypeptide is NAD-dependent protein deacylase (Bacteroides thetaiotaomicron (strain ATCC 29148 / DSM 2079 / JCM 5827 / CCUG 10774 / NCTC 10582 / VPI-5482 / E50)).